The primary structure comprises 289 residues: ATP synthase gamma chain (289 aa).

The protein belongs to the ATPase gamma chain family. F-type ATPases have 2 components, CF(1) - the catalytic core - and CF(0) - the membrane proton channel. CF(1) has five subunits: alpha(3), beta(3), gamma(1), delta(1), epsilon(1). CF(0) has three main subunits: a, b and c.

It is found in the cell membrane. Its function is as follows. Produces ATP from ADP in the presence of a proton gradient across the membrane. The gamma chain is believed to be important in regulating ATPase activity and the flow of protons through the CF(0) complex. The polypeptide is ATP synthase gamma chain (Lawsonia intracellularis (strain PHE/MN1-00)).